The chain runs to 673 residues: UvrABC system protein B (673 aa).

Positions 26–183 constitute a Helicase ATP-binding domain; the sequence is EGLEDGLAHQ…RRLAELQYTR (158 aa). 39-46 is an ATP binding site; sequence GVTGSGKT. A Beta-hairpin motif is present at residues 92-115; that stretch reads YYDYYQPEAYVPSSDTFIEKDASV. The 167-residue stretch at 431–597 folds into the Helicase C-terminal domain; it reads QVDDLLSEIR…GLNKKVVDIL (167 aa). In terms of domain architecture, UVR spans 633–668; the sequence is QQKIHELEGQMMQHAQNLEFEEAAQIRDQLHQLREL.

This sequence belongs to the UvrB family. In terms of assembly, forms a heterotetramer with UvrA during the search for lesions. Interacts with UvrC in an incision complex.

The protein resides in the cytoplasm. The UvrABC repair system catalyzes the recognition and processing of DNA lesions. A damage recognition complex composed of 2 UvrA and 2 UvrB subunits scans DNA for abnormalities. Upon binding of the UvrA(2)B(2) complex to a putative damaged site, the DNA wraps around one UvrB monomer. DNA wrap is dependent on ATP binding by UvrB and probably causes local melting of the DNA helix, facilitating insertion of UvrB beta-hairpin between the DNA strands. Then UvrB probes one DNA strand for the presence of a lesion. If a lesion is found the UvrA subunits dissociate and the UvrB-DNA preincision complex is formed. This complex is subsequently bound by UvrC and the second UvrB is released. If no lesion is found, the DNA wraps around the other UvrB subunit that will check the other stand for damage. The chain is UvrABC system protein B from Klebsiella pneumoniae (strain 342).